The primary structure comprises 287 residues: MYIQDVIMNLEKFWSDFGCVIDQPYDIEMGAGTYSPATFFRSFGANEWRVAYTQPCRRPTDGRYGENPNRMQRFYQYQVVLKPSPKDVQDLYIRSLESLGISPKEHDIRFVEDNWESPTLGAWGVGWEVWLDGMEITQFTYFQQMGGIPLTYIPVELTYGIERIAMYLQNIDNVYETKWNKNVKYKDIYKENERQFSYYNFEEADIDMLKTLYNMYKKEFQRLIAKQLYLPAYDYLAKSAHVFNLMDARNAIGVNERHQYILDIRNMAKSCAKLYIDSSNAEVIDVE.

This sequence belongs to the class-II aminoacyl-tRNA synthetase family. In terms of assembly, tetramer of two alpha and two beta subunits.

The protein localises to the cytoplasm. The catalysed reaction is tRNA(Gly) + glycine + ATP = glycyl-tRNA(Gly) + AMP + diphosphate. This Petrotoga mobilis (strain DSM 10674 / SJ95) protein is Glycine--tRNA ligase alpha subunit.